The following is a 518-amino-acid chain: Glutamate--cysteine ligase (518 aa).

The protein belongs to the glutamate--cysteine ligase type 1 family. Type 1 subfamily.

The catalysed reaction is L-cysteine + L-glutamate + ATP = gamma-L-glutamyl-L-cysteine + ADP + phosphate + H(+). Its pathway is sulfur metabolism; glutathione biosynthesis; glutathione from L-cysteine and L-glutamate: step 1/2. The chain is Glutamate--cysteine ligase from Salmonella paratyphi C (strain RKS4594).